The sequence spans 547 residues: G protein-coupled receptor associated sorting protein 3 (547 aa).

Basic residues-rich tracts occupy residues Met-1–Ala-10 and Ala-38–Thr-48. Residues Met-1–Asp-53 form a disordered region.

The protein belongs to the GPRASP family. In terms of assembly, homodimer.

It localises to the cytoplasm. It is found in the nucleus. Its function is as follows. Survival and differentiation promoting protein that plays a role in the regulation of neurosynaptogenesis. Induces phosphatase PP2A activity which results in APP dephosphorylation and inhibits BACE1-mediated processing of APP. This Macaca fascicularis (Crab-eating macaque) protein is G protein-coupled receptor associated sorting protein 3 (GPRASP3).